A 200-amino-acid polypeptide reads, in one-letter code: Recombination protein RecR (200 aa).

The segment at 58 to 75 adopts a C4-type zinc-finger fold; it reads CPLCFTLKESKEADCHFC. Residues 82 to 177 enclose the Toprim domain; the sequence is QSLCIVASPK…NISRLALGLP (96 aa).

The protein belongs to the RecR family.

May play a role in DNA repair. It seems to be involved in an RecBC-independent recombinational process of DNA repair. It may act with RecF and RecO. The polypeptide is Recombination protein RecR (Chlamydia pneumoniae (Chlamydophila pneumoniae)).